The chain runs to 475 residues: Nitrogenase vanadium-iron protein beta chain (475 aa).

[8Fe-7S] cluster-binding residues include Cys31, Cys56, Cys115, and Ser153.

This sequence belongs to the NifD/NifK/NifE/NifN family. In terms of assembly, hexamer of two alpha, two beta, and two delta chains. It depends on [8Fe-7S] cluster as a cofactor.

The enzyme catalyses N2 + 8 reduced [2Fe-2S]-[ferredoxin] + 16 ATP + 16 H2O = H2 + 8 oxidized [2Fe-2S]-[ferredoxin] + 2 NH4(+) + 16 ADP + 16 phosphate + 6 H(+). In terms of biological role, this vanadium-iron protein is part of the nitrogenase complex that catalyzes the key enzymatic reactions in nitrogen fixation. The protein is Nitrogenase vanadium-iron protein beta chain (vnfK) of Azotobacter vinelandii.